Reading from the N-terminus, the 431-residue chain is Enolase (431 aa).

Q167 provides a ligand contact to (2R)-2-phosphoglycerate. E209 acts as the Proton donor in catalysis. Mg(2+) contacts are provided by D246, E290, and D317. The (2R)-2-phosphoglycerate site is built by K342, R371, S372, and K393. The Proton acceptor role is filled by K342.

This sequence belongs to the enolase family. In terms of assembly, component of the RNA degradosome, a multiprotein complex involved in RNA processing and mRNA degradation. It depends on Mg(2+) as a cofactor.

Its subcellular location is the cytoplasm. The protein localises to the secreted. The protein resides in the cell surface. The enzyme catalyses (2R)-2-phosphoglycerate = phosphoenolpyruvate + H2O. The protein operates within carbohydrate degradation; glycolysis; pyruvate from D-glyceraldehyde 3-phosphate: step 4/5. Catalyzes the reversible conversion of 2-phosphoglycerate (2-PG) into phosphoenolpyruvate (PEP). It is essential for the degradation of carbohydrates via glycolysis. In Yersinia pseudotuberculosis serotype O:1b (strain IP 31758), this protein is Enolase.